A 246-amino-acid polypeptide reads, in one-letter code: Acetoacetate decarboxylase (246 aa).

The active-site Schiff-base intermediate with acetoacetate is Lys-116.

Belongs to the ADC family.

The catalysed reaction is acetoacetate + H(+) = acetone + CO2. Catalyzes the conversion of acetoacetate to acetone and carbon dioxide. This is Acetoacetate decarboxylase from Burkholderia mallei (strain NCTC 10247).